A 316-amino-acid polypeptide reads, in one-letter code: DNA-directed RNA polymerase subunit alpha (316 aa).

Residues 1–232 form an alpha N-terminal domain (alpha-NTD) region; sequence MSGNDLFPST…DLFNPLHHCS (232 aa). Residues 247 to 316 are alpha C-terminal domain (alpha-CTD); the sequence is KINDILVEEL…LNIYLPKEKY (70 aa).

Belongs to the RNA polymerase alpha chain family. As to quaternary structure, in plastids the minimal PEP RNA polymerase catalytic core is composed of four subunits: alpha, beta, beta', and beta''. When a (nuclear-encoded) sigma factor is associated with the core the holoenzyme is formed, which can initiate transcription.

The protein localises to the plastid. Its subcellular location is the chloroplast. It carries out the reaction RNA(n) + a ribonucleoside 5'-triphosphate = RNA(n+1) + diphosphate. Functionally, DNA-dependent RNA polymerase catalyzes the transcription of DNA into RNA using the four ribonucleoside triphosphates as substrates. The polypeptide is DNA-directed RNA polymerase subunit alpha (Mesostigma viride (Green alga)).